A 110-amino-acid polypeptide reads, in one-letter code: Iron-sulfur cluster assembly protein CyaY (110 aa).

Belongs to the frataxin family.

Involved in iron-sulfur (Fe-S) cluster assembly. May act as a regulator of Fe-S biogenesis. In Variovorax paradoxus (strain S110), this protein is Iron-sulfur cluster assembly protein CyaY.